A 189-amino-acid polypeptide reads, in one-letter code: Peptidyl-tRNA hydrolase (189 aa).

Position 15 (tyrosine 15) interacts with tRNA. The Proton acceptor role is filled by histidine 20. TRNA is bound by residues tyrosine 64, asparagine 66, and asparagine 112.

Belongs to the PTH family. As to quaternary structure, monomer.

It is found in the cytoplasm. It carries out the reaction an N-acyl-L-alpha-aminoacyl-tRNA + H2O = an N-acyl-L-amino acid + a tRNA + H(+). In terms of biological role, hydrolyzes ribosome-free peptidyl-tRNAs (with 1 or more amino acids incorporated), which drop off the ribosome during protein synthesis, or as a result of ribosome stalling. Its function is as follows. Catalyzes the release of premature peptidyl moieties from peptidyl-tRNA molecules trapped in stalled 50S ribosomal subunits, and thus maintains levels of free tRNAs and 50S ribosomes. The sequence is that of Peptidyl-tRNA hydrolase from Sulfurihydrogenibium sp. (strain YO3AOP1).